A 123-amino-acid polypeptide reads, in one-letter code: Small ribosomal subunit protein uS12c (123 aa).

The tract at residues A103–E123 is disordered. Residues K107–E123 show a composition bias toward basic residues.

It belongs to the universal ribosomal protein uS12 family. Part of the 30S ribosomal subunit.

The protein localises to the plastid. It is found in the chloroplast. Functionally, with S4 and S5 plays an important role in translational accuracy. Located at the interface of the 30S and 50S subunits. This Guillardia theta (Cryptophyte) protein is Small ribosomal subunit protein uS12c (rps12).